Consider the following 270-residue polypeptide: F-actin-capping protein subunit beta (270 aa).

The protein belongs to the F-actin-capping protein beta subunit family. Component of the F-actin capping complex, composed of a heterodimer of an alpha and a beta subunit.

It localises to the cytoplasm. Its subcellular location is the cytoskeleton. In terms of biological role, F-actin-capping proteins bind in a Ca(2+)-independent manner to the fast growing ends of actin filaments (barbed end) thereby blocking the exchange of subunits at these ends. Unlike other capping proteins (such as gelsolin and severin), these proteins do not sever actin filaments. This Caenorhabditis elegans protein is F-actin-capping protein subunit beta (cap-2).